The primary structure comprises 335 residues: Beta-ketoacyl-[acyl-carrier-protein] synthase III (335 aa).

Residues Cys-119 and His-261 contribute to the active site. The ACP-binding stretch occupies residues 262-266 (QANQR). Asn-291 is a catalytic residue.

Belongs to the thiolase-like superfamily. FabH family. Homodimer.

The protein localises to the cytoplasm. It carries out the reaction malonyl-[ACP] + acetyl-CoA + H(+) = 3-oxobutanoyl-[ACP] + CO2 + CoA. It participates in lipid metabolism; fatty acid biosynthesis. Its function is as follows. Catalyzes the condensation reaction of fatty acid synthesis by the addition to an acyl acceptor of two carbons from malonyl-ACP. Catalyzes the first condensation reaction which initiates fatty acid synthesis and may therefore play a role in governing the total rate of fatty acid production. Possesses both acetoacetyl-ACP synthase and acetyl transacylase activities. Its substrate specificity determines the biosynthesis of branched-chain and/or straight-chain of fatty acids. This is Beta-ketoacyl-[acyl-carrier-protein] synthase III from Prochlorococcus marinus (strain MIT 9312).